The primary structure comprises 558 residues: Probable rhamnogalacturonase B (558 aa).

Positions 1–21 (MLLDKLSVLSFLGLAPIFAAA) are cleaved as a signal peptide. The cysteines at positions 42 and 68 are disulfide-linked. Asn145 is a glycosylation site (N-linked (GlcNAc...) asparagine). The Proton donor role is filled by Asp219. Cys221 and Cys238 are disulfide-bonded. N-linked (GlcNAc...) asparagine glycans are attached at residues Asn239 and Asn254. His294 is an active-site residue. The N-linked (GlcNAc...) asparagine glycan is linked to Asn321. 2 cysteine pairs are disulfide-bonded: Cys344–Cys350 and Cys372–Cys381. A compositionally biased stretch (low complexity) spans 503–526 (VGAQEGSTTSAPSFAAPSGAGNSP). A disordered region spans residues 503–558 (VGAQEGSTTSAPSFAAPSGAGNSPQGPTGASGFGEKGQQGEQGEQGEQGEQGVCYV).

This sequence belongs to the glycosyl hydrolase 28 family.

The protein localises to the secreted. The catalysed reaction is Endohydrolysis of alpha-D-GalA-(1-&gt;2)-alpha-L-Rha glycosidic bond in the rhamnogalacturonan I backbone with initial inversion of anomeric configuration releasing oligosaccharides with beta-D-GalA at the reducing end.. Its function is as follows. Pectinolytic enzymes consist of four classes of enzymes: pectine lyase, polygalacturonase, pectin methylesterase and rhamnogalacturonase. Hydrolyzes alpha-D-galacturonopyranosyl-(1,2)-alpha-L-rhamnopyranosyl linkages in the backbone of the hairy regions of pectins. The polypeptide is Probable rhamnogalacturonase B (rhgB) (Aspergillus niger (strain ATCC MYA-4892 / CBS 513.88 / FGSC A1513)).